The sequence spans 347 residues: Dihydroorotase (347 aa).

Zn(2+) contacts are provided by His-13 and His-15. Substrate contacts are provided by residues 15–17 (HLR) and Asn-41. Zn(2+) is bound by residues Lys-99, His-136, and His-174. N6-carboxylysine is present on Lys-99. Residue His-136 coordinates substrate. Position 219 (Leu-219) interacts with substrate. Asp-247 provides a ligand contact to Zn(2+). Asp-247 is an active-site residue. 2 residues coordinate substrate: His-251 and Ala-263.

The protein belongs to the metallo-dependent hydrolases superfamily. DHOase family. Class II DHOase subfamily. In terms of assembly, homodimer. Zn(2+) serves as cofactor.

It carries out the reaction (S)-dihydroorotate + H2O = N-carbamoyl-L-aspartate + H(+). It participates in pyrimidine metabolism; UMP biosynthesis via de novo pathway; (S)-dihydroorotate from bicarbonate: step 3/3. Functionally, catalyzes the reversible cyclization of carbamoyl aspartate to dihydroorotate. The sequence is that of Dihydroorotase from Rhizobium meliloti (strain 1021) (Ensifer meliloti).